Here is a 209-residue protein sequence, read N- to C-terminus: High frequency lysogenization protein HflD homolog (209 aa).

Residues 79-121 (QGLNAELTRYTLSLMVLERKLNSAKGAMDTLGDRIAGLQRQLD) are a coiled coil.

It belongs to the HflD family.

The protein localises to the cytoplasm. The protein resides in the cell inner membrane. This is High frequency lysogenization protein HflD homolog from Enterobacter sp. (strain 638).